We begin with the raw amino-acid sequence, 168 residues long: Endoribonuclease YbeY (168 aa).

Zn(2+) contacts are provided by histidine 119, histidine 123, and histidine 129.

Belongs to the endoribonuclease YbeY family. It depends on Zn(2+) as a cofactor.

It is found in the cytoplasm. Functionally, single strand-specific metallo-endoribonuclease involved in late-stage 70S ribosome quality control and in maturation of the 3' terminus of the 16S rRNA. This is Endoribonuclease YbeY from Gluconobacter oxydans (strain 621H) (Gluconobacter suboxydans).